Here is a 616-residue protein sequence, read N- to C-terminus: Chaperone protein HscA (616 aa).

The protein belongs to the heat shock protein 70 family.

Chaperone involved in the maturation of iron-sulfur cluster-containing proteins. Has a low intrinsic ATPase activity which is markedly stimulated by HscB. Involved in the maturation of IscU. The sequence is that of Chaperone protein HscA from Proteus mirabilis (strain HI4320).